The sequence spans 64 residues: Large ribosomal subunit protein uL29 (64 aa).

Belongs to the universal ribosomal protein uL29 family.

This Pseudomonas entomophila (strain L48) protein is Large ribosomal subunit protein uL29.